The following is a 299-amino-acid chain: Regucalcin (299 aa).

Glutamate 18 contacts a divalent metal cation. 3 residues coordinate substrate: arginine 101, asparagine 103, and glutamate 121. The residue at position 144 (lysine 144) is an N6-succinyllysine. 2 residues coordinate a divalent metal cation: asparagine 154 and aspartate 204. Residue aspartate 204 is the Proton donor/acceptor of the active site. An N6-succinyllysine mark is found at lysine 244 and lysine 253. The residue at position 268 (serine 268) is a Phosphoserine.

This sequence belongs to the SMP-30/CGR1 family. In terms of assembly, monomer. The cofactor is Zn(2+). Mn(2+) is required as a cofactor. Requires Ca(2+) as cofactor. Mg(2+) serves as cofactor. It depends on Co(2+) as a cofactor. The N-terminus is blocked. In terms of tissue distribution, detected in liver (at protein level). Hepatocytes and renal proximal tubular epithelium.

It is found in the cytoplasm. The catalysed reaction is D-glucono-1,5-lactone + H2O = D-gluconate + H(+). It participates in cofactor biosynthesis; L-ascorbate biosynthesis via UDP-alpha-D-glucuronate pathway; L-ascorbate from UDP-alpha-D-glucuronate: step 3/4. Functionally, gluconolactonase with low activity towards other sugar lactones, including gulonolactone and galactonolactone. Catalyzes a key step in ascorbic acid (vitamin C) biosynthesis. Can also hydrolyze diisopropyl phosphorofluoridate and phenylacetate (in vitro). Calcium-binding protein. Modulates Ca(2+) signaling, and Ca(2+)-dependent cellular processes and enzyme activities. The sequence is that of Regucalcin (Rgn) from Rattus norvegicus (Rat).